We begin with the raw amino-acid sequence, 295 residues long: Cyclin-G1 (295 aa).

Belongs to the cyclin family. Cyclin G subfamily.

It localises to the nucleus. In terms of biological role, may play a role in growth regulation. Is associated with G2/M phase arrest in response to DNA damage. May be an intermediate by which p53 mediates its role as an inhibitor of cellular proliferation. In Pongo abelii (Sumatran orangutan), this protein is Cyclin-G1 (CCNG1).